The primary structure comprises 263 residues: MTRIDDKFAQLAKDGKKAFVAYVMAGDPNYETSLEVVKGLPAAGVDVIELGLPFTDPMADGPTIQLAGQRALEAGMTLQKTLDLARAFRKDDQTTPIVMMGYYNPIYSRGVDRFLAEAKDAGIDGLIVVDLPPEEDSELCLPAQAAGLNFIRLATPTTDDKRLPRVLQNTSGFVYYVSITGITGAAEAQAVDVGPEVARIKSAAALPVIVGFGVNTPEKSKAIAEVADGVVVGSAIVGKIGAGQSVSDVLAFVKTLADGAHSV.

Catalysis depends on proton acceptor residues Glu49 and Asp60.

The protein belongs to the TrpA family. Tetramer of two alpha and two beta chains.

The enzyme catalyses (1S,2R)-1-C-(indol-3-yl)glycerol 3-phosphate + L-serine = D-glyceraldehyde 3-phosphate + L-tryptophan + H2O. It functions in the pathway amino-acid biosynthesis; L-tryptophan biosynthesis; L-tryptophan from chorismate: step 5/5. In terms of biological role, the alpha subunit is responsible for the aldol cleavage of indoleglycerol phosphate to indole and glyceraldehyde 3-phosphate. In Roseobacter denitrificans (strain ATCC 33942 / OCh 114) (Erythrobacter sp. (strain OCh 114)), this protein is Tryptophan synthase alpha chain.